A 103-amino-acid chain; its full sequence is Large ribosomal subunit protein bL21 (103 aa).

The protein belongs to the bacterial ribosomal protein bL21 family. As to quaternary structure, part of the 50S ribosomal subunit. Contacts protein L20.

Its function is as follows. This protein binds to 23S rRNA in the presence of protein L20. This is Large ribosomal subunit protein bL21 from Teredinibacter turnerae (strain ATCC 39867 / T7901).